A 598-amino-acid chain; its full sequence is DNA mismatch repair protein MutL (598 aa).

Belongs to the DNA mismatch repair MutL/HexB family.

Functionally, this protein is involved in the repair of mismatches in DNA. It is required for dam-dependent methyl-directed DNA mismatch repair. May act as a 'molecular matchmaker', a protein that promotes the formation of a stable complex between two or more DNA-binding proteins in an ATP-dependent manner without itself being part of a final effector complex. This chain is DNA mismatch repair protein MutL, found in Thiobacillus denitrificans (strain ATCC 25259 / T1).